Here is a 447-residue protein sequence, read N- to C-terminus: Tubulin beta chain (447 aa).

Residues glutamine 11, glutamate 69, serine 138, glycine 142, threonine 143, glycine 144, asparagine 204, and asparagine 226 each contribute to the GTP site. Glutamate 69 provides a ligand contact to Mg(2+). A disordered region spans residues 425–447 (YQEASISEGEEEYDEEAPLEAEE). Over residues 432–447 (EGEEEYDEEAPLEAEE) the composition is skewed to acidic residues.

Belongs to the tubulin family. As to quaternary structure, dimer of alpha and beta chains. A typical microtubule is a hollow water-filled tube with an outer diameter of 25 nm and an inner diameter of 15 nM. Alpha-beta heterodimers associate head-to-tail to form protofilaments running lengthwise along the microtubule wall with the beta-tubulin subunit facing the microtubule plus end conferring a structural polarity. Microtubules usually have 13 protofilaments but different protofilament numbers can be found in some organisms and specialized cells. Mg(2+) serves as cofactor.

The protein resides in the cytoplasm. It localises to the cytoskeleton. Tubulin is the major constituent of microtubules, a cylinder consisting of laterally associated linear protofilaments composed of alpha- and beta-tubulin heterodimers. Microtubules grow by the addition of GTP-tubulin dimers to the microtubule end, where a stabilizing cap forms. Below the cap, tubulin dimers are in GDP-bound state, owing to GTPase activity of alpha-tubulin. The chain is Tubulin beta chain (tubB) from Phaeosphaeria nodorum (strain SN15 / ATCC MYA-4574 / FGSC 10173) (Glume blotch fungus).